The following is a 467-amino-acid chain: tRNA modification GTPase MnmE (467 aa).

3 residues coordinate (6S)-5-formyl-5,6,7,8-tetrahydrofolate: arginine 25, glutamate 87, and lysine 130. One can recognise a TrmE-type G domain in the interval 226-389 (GLSVVLAGQP…LRGELLRIAG (164 aa)). Asparagine 236 is a K(+) binding site. Residues 236–241 (NVGKSS), 255–261 (TPIAGTT), and 280–283 (DTAG) contribute to the GTP site. Mg(2+) is bound at residue serine 240. 3 residues coordinate K(+): threonine 255, isoleucine 257, and threonine 260. Threonine 261 serves as a coordination point for Mg(2+). Lysine 467 provides a ligand contact to (6S)-5-formyl-5,6,7,8-tetrahydrofolate.

This sequence belongs to the TRAFAC class TrmE-Era-EngA-EngB-Septin-like GTPase superfamily. TrmE GTPase family. As to quaternary structure, homodimer. Heterotetramer of two MnmE and two MnmG subunits. It depends on K(+) as a cofactor.

The protein localises to the cytoplasm. In terms of biological role, exhibits a very high intrinsic GTPase hydrolysis rate. Involved in the addition of a carboxymethylaminomethyl (cmnm) group at the wobble position (U34) of certain tRNAs, forming tRNA-cmnm(5)s(2)U34. The polypeptide is tRNA modification GTPase MnmE (Burkholderia mallei (strain NCTC 10247)).